A 490-amino-acid chain; its full sequence is Alginate production protein AlgE (490 aa).

Residues 1 to 32 form the signal peptide; the sequence is MNSSRSVNPRPSFAPRALSLAIALLLGAPAFA. 2 stretches are compositionally biased toward polar residues: residues 102 to 115 and 343 to 355; these read DTLQ…NNSR and QFQQ…NRSN. Disordered regions lie at residues 102–121 and 331–355; these read DTLQ…GREP and ARGS…NRSN.

The protein belongs to the AlgE family.

The protein localises to the cell outer membrane. It functions in the pathway glycan biosynthesis; alginate biosynthesis. In terms of biological role, has non-porin-like, channel-forming properties and probably functions as an alginate permeability pore. In Pseudomonas aeruginosa (strain ATCC 15692 / DSM 22644 / CIP 104116 / JCM 14847 / LMG 12228 / 1C / PRS 101 / PAO1), this protein is Alginate production protein AlgE (algE).